A 132-amino-acid polypeptide reads, in one-letter code: ATP synthase epsilon chain (132 aa).

This sequence belongs to the ATPase epsilon chain family. F-type ATPases have 2 components, CF(1) - the catalytic core - and CF(0) - the membrane proton channel. CF(1) has five subunits: alpha(3), beta(3), gamma(1), delta(1), epsilon(1). CF(0) has three main subunits: a, b and c.

It is found in the cell membrane. Produces ATP from ADP in the presence of a proton gradient across the membrane. This chain is ATP synthase epsilon chain (atpC), found in Geobacillus stearothermophilus (Bacillus stearothermophilus).